Here is an 80-residue protein sequence, read N- to C-terminus: Omega-conotoxin-like 2/7 (80 aa).

An N-terminal signal peptide occupies residues 1–22; it reads MKLTCMMIVAVMFLTASIFITA. The propeptide occupies 23 to 51; that stretch reads DNSRNGIENLPRMRRHEMKKPKASKLNKR. 3 disulfides stabilise this stretch: cysteine 53–cysteine 71, cysteine 60–cysteine 75, and cysteine 70–cysteine 79.

It belongs to the conotoxin O1 superfamily. In terms of tissue distribution, expressed by the venom duct.

Its subcellular location is the secreted. Functionally, omega-conotoxins act at presynaptic membranes, they bind and block voltage-gated calcium channels (Cav). The protein is Omega-conotoxin-like 2/7 of Conus imperialis (Imperial cone).